We begin with the raw amino-acid sequence, 259 residues long: Pyrroloquinoline-quinone synthase (259 aa).

It belongs to the PqqC family.

The enzyme catalyses 6-(2-amino-2-carboxyethyl)-7,8-dioxo-1,2,3,4,7,8-hexahydroquinoline-2,4-dicarboxylate + 3 O2 = pyrroloquinoline quinone + 2 H2O2 + 2 H2O + H(+). Its pathway is cofactor biosynthesis; pyrroloquinoline quinone biosynthesis. Its function is as follows. Ring cyclization and eight-electron oxidation of 3a-(2-amino-2-carboxyethyl)-4,5-dioxo-4,5,6,7,8,9-hexahydroquinoline-7,9-dicarboxylic-acid to PQQ. The protein is Pyrroloquinoline-quinone synthase of Bradyrhizobium diazoefficiens (strain JCM 10833 / BCRC 13528 / IAM 13628 / NBRC 14792 / USDA 110).